A 453-amino-acid chain; its full sequence is uncharacterized protein (453 aa).

This is an uncharacterized protein from Magallana gigas (Pacific oyster).